The primary structure comprises 238 residues: Ribonuclease PH (238 aa).

Phosphate contacts are provided by residues Arg-86 and 124-126; that span reads GTR.

It belongs to the RNase PH family. As to quaternary structure, homodimer. Has a tendency to aggregate into multimers. Mg(2+) is required as a cofactor.

It catalyses the reaction tRNA(n+1) + phosphate = tRNA(n) + a ribonucleoside 5'-diphosphate. Functionally, phosphorolytic exoribonuclease that plays an important role in tRNA 3'-end maturation; has no activity on a tRNA precursor with a 3'-terminal phosphate group. In vitro is freely reversible, adds nucleotides to the ends of RNA molecules by using nucleoside diphosphates as substrates, but this may not be physiologically important. Probably plays a role in initiation of 16S rRNA degradation (leading to ribosome degradation) during starvation. This is Ribonuclease PH from Escherichia coli (strain K12 / MC4100 / BW2952).